Here is a 274-residue protein sequence, read N- to C-terminus: Guanylyl cyclase 1 (274 aa).

In terms of assembly, functions both as monomer and homooligomer. Mg(2+) serves as cofactor.

It carries out the reaction GTP = 3',5'-cyclic GMP + diphosphate. It functions in the pathway nucleotide metabolism. In terms of biological role, magnesium-dependent guanylyl cyclase that catalyzes the formation of guanosine 3',5'-cyclic monophosphate (cGMP) from guanosine 5'-triphosphate (GTP). Can also use ATP as substrate with a low activity. In Arabidopsis thaliana (Mouse-ear cress), this protein is Guanylyl cyclase 1.